Reading from the N-terminus, the 141-residue chain is Lutropin subunit beta (141 aa).

A signal peptide spans 1-20; it reads MEMLQGLLLLMLLSMGGTWA. 6 cysteine pairs are disulfide-bonded: Cys-29/Cys-77, Cys-43/Cys-92, Cys-46/Cys-130, Cys-54/Cys-108, Cys-58/Cys-110, and Cys-113/Cys-120. Residues Asn-33 and Asn-50 are each glycosylated (N-linked (GlcNAc...) asparagine).

It belongs to the glycoprotein hormones subunit beta family. Heterodimer of a common alpha chain and a unique beta chain which confers biological specificity to thyrotropin, lutropin, follitropin and gonadotropin.

It is found in the secreted. Its function is as follows. Promotes spermatogenesis and ovulation by stimulating the testes and ovaries to synthesize steroids. This Pongo pygmaeus (Bornean orangutan) protein is Lutropin subunit beta (LHB).